A 187-amino-acid chain; its full sequence is Peptide deformylase (187 aa).

The Fe cation site is built by cysteine 94 and histidine 136. Glutamate 137 is an active-site residue. Histidine 140 lines the Fe cation pocket.

This sequence belongs to the polypeptide deformylase family. Requires Fe(2+) as cofactor.

The enzyme catalyses N-terminal N-formyl-L-methionyl-[peptide] + H2O = N-terminal L-methionyl-[peptide] + formate. Its function is as follows. Removes the formyl group from the N-terminal Met of newly synthesized proteins. Requires at least a dipeptide for an efficient rate of reaction. N-terminal L-methionine is a prerequisite for activity but the enzyme has broad specificity at other positions. The sequence is that of Peptide deformylase from Chlorobaculum parvum (strain DSM 263 / NCIMB 8327) (Chlorobium vibrioforme subsp. thiosulfatophilum).